The primary structure comprises 431 residues: Tol-Pal system protein TolB (431 aa).

An N-terminal signal peptide occupies residues 1–26; sequence MSLMTKLGFRALVASCLITAGSAANA. Residues 406 to 431 are disordered; sequence DGSAPPQILSVQGGSVREPSWGPFMQ.

It belongs to the TolB family. As to quaternary structure, the Tol-Pal system is composed of five core proteins: the inner membrane proteins TolA, TolQ and TolR, the periplasmic protein TolB and the outer membrane protein Pal. They form a network linking the inner and outer membranes and the peptidoglycan layer.

The protein localises to the periplasm. Functionally, part of the Tol-Pal system, which plays a role in outer membrane invagination during cell division and is important for maintaining outer membrane integrity. This chain is Tol-Pal system protein TolB, found in Burkholderia orbicola (strain MC0-3).